A 317-amino-acid chain; its full sequence is Melanocyte-stimulating hormone receptor (317 aa).

At 1–37 the chain is on the extracellular side; sequence MPVLGSQRRLLGSLNCTPPATFPLTLAPNRTGPQCLE. Asparagine 29 carries an N-linked (GlcNAc...) asparagine glycan. A helical transmembrane segment spans residues 38–63; that stretch reads VSIPDGLFLSLGLVSLVENVLVVAAI. The Cytoplasmic portion of the chain corresponds to 64-72; that stretch reads AKNRNLHSP. Residues 73 to 93 traverse the membrane as a helical segment; it reads MYYFICCLAVSDLLVSVSNVL. Topologically, residues 94-118 are extracellular; that stretch reads ETAVMLLLEAGALAARAAVVQQLDN. Residues 119–140 traverse the membrane as a helical segment; it reads VIDMLICGSMVSSLCFLGAIAV. Topologically, residues 141 to 163 are cytoplasmic; sequence DRYISIFYALRYHSVVTLPRAWR. A helical membrane pass occupies residues 164–183; that stretch reads IIAAIWVASILTSLLFITYY. The Extracellular segment spans residues 184 to 191; sequence NHTVVLLC. Residues 192–211 form a helical membrane-spanning segment; it reads LVGFFIAMLALMAVLYVHML. At 212 to 240 the chain is on the cytoplasmic side; sequence ARACQHARGIARLQKRQRPIHQGFGLKGA. A helical membrane pass occupies residues 241–266; sequence ATLTILLGVFFLCWGPFFLHLSLIVL. Residues 267–279 are Extracellular-facing; the sequence is CPQHPTCGCIFKN. Residues 280–300 form a helical membrane-spanning segment; that stretch reads FNLFLALIICNAIVDPLIYAF. At 301 to 317 the chain is on the cytoplasmic side; sequence RSQELRKTLQEVLQCSW. Cysteine 315 is lipidated: S-palmitoyl cysteine.

It belongs to the G-protein coupled receptor 1 family. Interacts with MGRN1, but does not undergo MGRN1-mediated ubiquitination; this interaction competes with GNAS-binding and thus inhibits agonist-induced cAMP production. Interacts with OPN3; the interaction results in a decrease in MC1R-mediated cAMP signaling and ultimately a decrease in melanin production in melanocytes.

The protein localises to the cell membrane. Its function is as follows. Receptor for MSH (alpha, beta and gamma) and ACTH. The activity of this receptor is mediated by G proteins which activate adenylate cyclase. Mediates melanogenesis, the production of eumelanin (black/brown) and phaeomelanin (red/yellow), via regulation of cAMP signaling in melanocytes. The polypeptide is Melanocyte-stimulating hormone receptor (MC1R) (Capreolus capreolus (European roe deer)).